A 368-amino-acid polypeptide reads, in one-letter code: 3-dehydroquinate synthase (368 aa).

NAD(+)-binding positions include 71–76 (DGEAFK), 105–109 (GVVGD), 129–130 (TT), Lys-142, Lys-151, and 169–172 (TLRT). 3 residues coordinate Zn(2+): Glu-184, His-247, and His-264.

The protein belongs to the sugar phosphate cyclases superfamily. Dehydroquinate synthase family. The cofactor is Co(2+). Zn(2+) serves as cofactor. It depends on NAD(+) as a cofactor.

The protein localises to the cytoplasm. It catalyses the reaction 7-phospho-2-dehydro-3-deoxy-D-arabino-heptonate = 3-dehydroquinate + phosphate. It participates in metabolic intermediate biosynthesis; chorismate biosynthesis; chorismate from D-erythrose 4-phosphate and phosphoenolpyruvate: step 2/7. Its function is as follows. Catalyzes the conversion of 3-deoxy-D-arabino-heptulosonate 7-phosphate (DAHP) to dehydroquinate (DHQ). This Cupriavidus taiwanensis (strain DSM 17343 / BCRC 17206 / CCUG 44338 / CIP 107171 / LMG 19424 / R1) (Ralstonia taiwanensis (strain LMG 19424)) protein is 3-dehydroquinate synthase.